The chain runs to 165 residues: Secreted acidic protein 2 (165 aa).

Acidic residues-rich tracts occupy residues 1–58 (WSXS…DDSG) and 80–102 (ESSD…DAYN). The disordered stretch occupies residues 1–112 (WSXSGDDDDD…DDSQAGELNS (112 aa)). Polar residues predominate over residues 103 to 112 (DDSQAGELNS).

As to expression, component of the acid-insoluble and acid-soluble organic matrix of the aragonitic skeleton (at protein level).

The protein localises to the secreted. The chain is Secreted acidic protein 2 from Acropora millepora (Staghorn coral).